The primary structure comprises 388 residues: Serpin B11 (388 aa).

Residues 338–362 (EEGTEAAAATGESISVKRLPVTVQF) are RCL.

Belongs to the serpin family. Ov-serpin subfamily. In terms of tissue distribution, expressed in eye, lung, lymphocytes, thymus, stomach, uterus, heart, brain, liver, skeletal muscle, and in day 7, 15, and 17 embryos.

It localises to the cytoplasm. Functionally, inhibitor of serine proteases. Has moderate inhibitory activity for trypsin-like peptidases, but also some activity with cysteine peptidases, cathepsin L, K, and V, and the serine peptidase, tryptase gamma. The polypeptide is Serpin B11 (Serpinb11) (Mus musculus (Mouse)).